Consider the following 71-residue polypeptide: Small ribosomal subunit protein bS21 (71 aa).

Positions 39-71 are disordered; sequence EKPTQERKRKAAAAVKRQMRRTSRDVTKRKRLY. Residues 45–71 are compositionally biased toward basic residues; it reads RKRKAAAAVKRQMRRTSRDVTKRKRLY.

Belongs to the bacterial ribosomal protein bS21 family.

This is Small ribosomal subunit protein bS21 from Xylella fastidiosa (strain M12).